We begin with the raw amino-acid sequence, 302 residues long: Formylmethanofuran--tetrahydromethanopterin formyltransferase (302 aa).

This sequence belongs to the FTR family. As to quaternary structure, homotetramer.

It is found in the cytoplasm. It carries out the reaction N-formylmethanofuran + 5,6,7,8-tetrahydromethanopterin + H(+) = N(5)-formyl-5,6,7,8-tetrahydromethanopterin + methanofuran. Its pathway is one-carbon metabolism; formaldehyde degradation; formate from formaldehyde (H(4)MPT route): step 4/5. Its function is as follows. Catalyzes the transfer of a formyl group from 5-formyl tetrahydromethanopterin (5-formyl-H(4)MPT) to methanofuran (MFR) to produce formylmethanofuran (formyl-MFR) and tetrahydromethanopterin (H(4)MPT). This is Formylmethanofuran--tetrahydromethanopterin formyltransferase from Methylobacillus flagellatus (strain ATCC 51484 / DSM 6875 / VKM B-1610 / KT).